The chain runs to 152 residues: 17.1 kDa class II heat shock protein (152 aa).

Positions 36 to 152 (DAKAMAATPA…KPKTIQVKVA (117 aa)) constitute a sHSP domain.

The protein belongs to the small heat shock protein (HSP20) family.

The protein resides in the cytoplasm. The sequence is that of 17.1 kDa class II heat shock protein (HSP17.7) from Pisum sativum (Garden pea).